The sequence spans 370 residues: Platelet-derived growth factor D (370 aa).

The N-terminal stretch at 1 to 18 is a signal peptide; it reads MHRLIFVYTLICANFCSC. Residues 52 to 170 enclose the CUB domain; the sequence is RDETIQVKGN…PGFKIYYSLL (119 aa). C109 and C131 form a disulfide bridge. N-linked (GlcNAc...) asparagine glycosylation occurs at N276. Disulfide bonds link C302/C360 and C306/C362.

Belongs to the PDGF/VEGF growth factor family. As to quaternary structure, homodimer; disulfide-linked. Interacts with PDGFRB homodimers, and with heterodimers formed by PDGFRA and PDGFRB. Post-translationally, activated by proteolytic cleavage. Proteolytic removal of the N-terminal CUB domain releasing the core domain is necessary for unmasking the receptor-binding epitopes of the core domain. Cleavage after Arg-247 or Arg-249 by urokinase plasminogen activator gives rise to the active form. In terms of tissue distribution, expressed at high levels in the heart, pancreas, adrenal gland and ovary and at low levels in placenta, liver, kidney, prostate, testis, small intestine, spleen and colon. In the kidney, expressed by the visceral epithelial cells of the glomeruli. A widespread expression is also seen in the medial smooth muscle cells of arteries and arterioles, as well as in smooth muscle cells of vasa rectae in the medullary area. Expressed in the adventitial connective tissue surrounding the suprarenal artery. In chronic obstructive nephropathy, a persistent expression is seen in glomerular visceral epithelial cells and vascular smooth muscle cells, as well as de novo expression by periglomerular interstitial cells and by some neointimal cells of atherosclerotic vessels. Expression in normal prostate is seen preferentially in the mesenchyme of the gland while expression is increased and more profuse in prostate carcinoma. Expressed in many ovarian, lung, renal and brain cancer-derived cell lines.

The protein localises to the secreted. Functionally, growth factor that plays an essential role in the regulation of embryonic development, cell proliferation, cell migration, survival and chemotaxis. Potent mitogen for cells of mesenchymal origin. Plays an important role in wound healing. Induces macrophage recruitment, increased interstitial pressure, and blood vessel maturation during angiogenesis. Can initiate events that lead to a mesangial proliferative glomerulonephritis, including influx of monocytes and macrophages and production of extracellular matrix. The sequence is that of Platelet-derived growth factor D (PDGFD) from Homo sapiens (Human).